The following is a 701-amino-acid chain: MNPDAPTPKNKSSRSRPSDRPQARKKAKIKTKGIYLRAIGDAFVKLNPKSAIRNPVMFLVWVGTIITLSVTIEPNLFGTTQQKNPQLFNGILTGILFFTVWFANFAEAVAEGRGKAQADTLRSTKSETLAKLLSPDGKITDVPSTSLKQGDTVYVVAGDVIPADGEVIMGVASVDESAITGESAPVLKESGSDIASSVTGGTRIISDELIVRVTADPGKGFIDRMIALVEGAERTKTPNEVALTVLLAVLSLVFLFVVATLPVFAYYADTPINVPILVALLVALIPTTIGGLLSAIGIAGMDRVAQFNVIATSGRAVEACGDVNTLVLDKTGTITLGNRLAEEFIPINGHSIEQVASVAWVASVFDDTPEGKSIVRLAEKLGIRYDLDPNQAQGVEFSAKTRMSGTNLPGGREARKGAVGAIKGFVRSRNGRITPELDVAYEQVSQQGGTPLAVCLDNEIYGVIYLKDIVKSGIRERFDQLRRMGVRTIMLTGDNRITASVIAQEAGVDDFIAEATPEDKISVIQREQAQGKLVAMTGDGTNDAPALAQANVGVAMNTGTQAAKEAANMVDLDSDPTKLIDIVSIGKQLLITRGALTTFSLANDIAKYFAIIPVIFASANLQSLNVMNLTSTNSAVLSALIYNALIIPALIPLALKGVQFRPLTANQLLQRNILIYGLGGVIAPFIAIKLIDVLITLVGLA.

Residues 1-28 are disordered; that stretch reads MNPDAPTPKNKSSRSRPSDRPQARKKAK. The next 4 membrane-spanning stretches (helical) occupy residues 57 to 77, 90 to 110, 245 to 265, and 276 to 296; these read MFLV…PNLF, GILT…EAVA, VLLA…PVFA, and ILVA…LSAI. Catalysis depends on Asp-329, which acts as the 4-aspartylphosphate intermediate. Residues Asp-366, Glu-370, 397–404, and Lys-416 each bind ATP; that span reads FSAKTRMS. Mg(2+)-binding residues include Asp-539 and Asp-543. 3 helical membrane-spanning segments follow: residues 599–619, 635–655, and 681–701; these read FSLA…FASA, AVLS…PLAL, and VIAP…VGLA.

It belongs to the cation transport ATPase (P-type) (TC 3.A.3) family. Type IA subfamily. As to quaternary structure, the system is composed of three essential subunits: KdpA, KdpB and KdpC.

It localises to the cell membrane. It carries out the reaction K(+)(out) + ATP + H2O = K(+)(in) + ADP + phosphate + H(+). Part of the high-affinity ATP-driven potassium transport (or Kdp) system, which catalyzes the hydrolysis of ATP coupled with the electrogenic transport of potassium into the cytoplasm. This subunit is responsible for energy coupling to the transport system and for the release of the potassium ions to the cytoplasm. The polypeptide is Potassium-transporting ATPase ATP-binding subunit (Anabaena sp. (strain L31)).